The sequence spans 366 residues: Glutamate 5-kinase (366 aa).

Lys-17 is a binding site for ATP. Positions 57, 144, and 156 each coordinate substrate. Residues 176–177 (SD) and 216–222 (TGGMVSK) contribute to the ATP site. The 79-residue stretch at 278–356 (SGALTLDDGA…SDLPAEMRRP (79 aa)) folds into the PUA domain.

This sequence belongs to the glutamate 5-kinase family.

The protein localises to the cytoplasm. It carries out the reaction L-glutamate + ATP = L-glutamyl 5-phosphate + ADP. The protein operates within amino-acid biosynthesis; L-proline biosynthesis; L-glutamate 5-semialdehyde from L-glutamate: step 1/2. In terms of biological role, catalyzes the transfer of a phosphate group to glutamate to form L-glutamate 5-phosphate. The chain is Glutamate 5-kinase from Mycolicibacterium vanbaalenii (strain DSM 7251 / JCM 13017 / BCRC 16820 / KCTC 9966 / NRRL B-24157 / PYR-1) (Mycobacterium vanbaalenii).